The following is a 459-amino-acid chain: Cyclooctatin synthase (459 aa).

Residue C408 participates in heme binding.

Belongs to the cytochrome P450 family. Heme is required as a cofactor.

It carries out the reaction cyclooctat-9-ene-5,7-diol + AH2 + O2 = cyclooctatin + A + H2O. In terms of biological role, involved in the biosynthesis of cyclooctatin, a potent inhibitor of lysophospholipase. Catalyzes the hydroxylation of cyclooctat-9-ene-5,7-diol at C-18 to yield the final product, cyclooctatin. This chain is Cyclooctatin synthase, found in Streptomyces melanosporofaciens.